Reading from the N-terminus, the 373-residue chain is MSVPAFIDISEEDQAAELRAYLKSKGAEISEENSEGGLHVDLAQIIEACDVCLKEDDKDVESVMNSVVSLLLILEPDKQEALIESLCEKLVKFREGERPSLRLQLLSNLFHGMDKNTPVRYTVYCSLIKVAASCGAIQYIPTELDQVRKWISDWNLTTEKKHTLLRLLYEALVDCKKSDAASKVMVELLGSYTEDNASQARVDAHRCIVRALKDPNAFLFDHLLTLKPVKFLEGELIHDLLTIFVSAKLAYVKFYQNNKDFIDSLGLLHEQNMAKMRLLTFMGMAVENKEISFDTMQQELQIGADDVEAFVIDAVRTKMVYCKIDQTQRKVVVSHSTHRTFGKQQWQQLYDTLNAWKQNLNKVKNSLLSLSDT.

The residue at position 2 (Ser-2) is an N-acetylserine. 2 positions are modified to phosphoserine: Ser-2 and Ser-152. One can recognise a PCI domain in the interval 180–338 (AASKVMVELL…RKVVVSHSTH (159 aa)). Lys-253 is modified (N6-acetyllysine). Ser-366 is subject to Phosphoserine.

It belongs to the eIF-3 subunit M family. As to quaternary structure, component of the eukaryotic translation initiation factor 3 (eIF-3) complex, which is composed of 13 subunits: EIF3A, EIF3B, EIF3C, EIF3D, EIF3E, EIF3F, EIF3G, EIF3H, EIF3I, EIF3J, EIF3K, EIF3L and EIF3M. The eIF-3 complex appears to include 3 stable modules: module A is composed of EIF3A, EIF3B, EIF3G and EIF3I; module B is composed of EIF3F, EIF3H, and EIF3M; and module C is composed of EIF3C, EIF3D, EIF3E, EIF3K and EIF3L. EIF3C of module C binds EIF3B of module A and EIF3H of module B, thereby linking the three modules. EIF3J is a labile subunit that binds to the eIF-3 complex via EIF3B. The eIF-3 complex interacts with RPS6KB1 under conditions of nutrient depletion. Mitogenic stimulation leads to binding and activation of a complex composed of MTOR and RPTOR, leading to phosphorylation and release of RPS6KB1 and binding of EIF4B to eIF-3.

It is found in the cytoplasm. Functionally, component of the eukaryotic translation initiation factor 3 (eIF-3) complex, which is required for several steps in the initiation of protein synthesis. The eIF-3 complex associates with the 40S ribosome and facilitates the recruitment of eIF-1, eIF-1A, eIF-2:GTP:methionyl-tRNAi and eIF-5 to form the 43S pre-initiation complex (43S PIC). The eIF-3 complex stimulates mRNA recruitment to the 43S PIC and scanning of the mRNA for AUG recognition. The eIF-3 complex is also required for disassembly and recycling of post-termination ribosomal complexes and subsequently prevents premature joining of the 40S and 60S ribosomal subunits prior to initiation. The eIF-3 complex specifically targets and initiates translation of a subset of mRNAs involved in cell proliferation, including cell cycling, differentiation and apoptosis, and uses different modes of RNA stem-loop binding to exert either translational activation or repression. This is Eukaryotic translation initiation factor 3 subunit M from Bos taurus (Bovine).